The chain runs to 520 residues: Zinc finger and BTB domain-containing protein 45 (520 aa).

The BTB domain maps to 33 to 96 (CDVTVRIREA…LYSGSLVVAQ (64 aa)). Disordered stretches follow at residues 182 to 272 (PAPP…GGAG) and 337 to 372 (FHLG…PDAA). The span at 206–225 (RGEEDDDEETDEETDAEEGE) shows a compositional bias: acidic residues. Residues 342-363 (PGPPAPTPPTPSGPAPAPPPTF) show a composition bias toward pro residues. 4 consecutive C2H2-type zinc fingers follow at residues 412-434 (YECS…MFIH), 440-462 (HQCA…MVTH), 468-490 (FQCA…MRTH), and 495-517 (APCP…LAAH).

Belongs to the krueppel C2H2-type zinc-finger protein family.

The protein localises to the nucleus. In terms of biological role, may be involved in transcriptional regulation. In the central nervous system, may play a role in glial cell differentiation. This is Zinc finger and BTB domain-containing protein 45 from Mus musculus (Mouse).